The following is a 276-amino-acid chain: Adenylate kinase (276 aa).

52–57 (GAGKGT) is an ATP binding site. An NMP region spans residues 72–101 (ATGDMLRAQVAAKTPLGREAKKIMDAGGLV). Residues Thr73, Arg78, 99 to 101 (GLV), 128 to 131 (GFPR), and Gln135 each bind AMP. The LID stretch occupies residues 169–206 (GRLVHPASGRSYHKIFNPPKAPMTDDVTGEPLIQRSDD). Residues Arg170 and 179–180 (SY) contribute to the ATP site. Residues Arg203 and Arg214 each coordinate AMP. Gln242 contributes to the ATP binding site.

It belongs to the adenylate kinase family. AK2 subfamily. In terms of assembly, monomer.

Its subcellular location is the cytoplasm. It localises to the cytosol. The protein resides in the mitochondrion intermembrane space. It carries out the reaction AMP + ATP = 2 ADP. Catalyzes the reversible transfer of the terminal phosphate group between ATP and AMP. Plays an important role in cellular energy homeostasis and in adenine nucleotide metabolism. Adenylate kinase activity is critical for regulation of the phosphate utilization and the AMP de novo biosynthesis pathways. In Pyrenophora tritici-repentis (strain Pt-1C-BFP) (Wheat tan spot fungus), this protein is Adenylate kinase (adk1).